Here is a 170-residue protein sequence, read N- to C-terminus: Cathelicidin antimicrobial peptide (170 aa).

The first 30 residues, 1-30, serve as a signal peptide directing secretion; that stretch reads MKTQRDGPSLGRWSLVLLLLGLVMPLAIVA. Residues 31 to 131 constitute a propeptide, cathelin-like domain (CLD); that stretch reads QVLSYQEAVL…DISCDKDNRR (101 aa). Intrachain disulfides connect cysteine 86/cysteine 97 and cysteine 108/cysteine 125. Residues 150 to 162 form an active core region; the sequence is LKKIGQKIKDFLG.

Belongs to the cathelicidin family. Monomer, homodimer or homotrimer (in vitro). Oligomerizes as tetra- or hexamer in solution (in vitro). Post-translationally, proteolytically cleaved by proteinase PRTN3 into antibacterial peptide LL-37. Proteolytically cleaved by cathepsin CTSG and neutrophil elastase ELANE. Resistant to proteolytic degradation in solution, and when bound to both zwitterionic (mimicking mammalian membranes) and negatively charged membranes (mimicking bacterial membranes). In terms of processing, after secretion onto the skin surface, the CAMP gene product is processed by a serine protease-dependent mechanism into multiple novel antimicrobial peptides distinct from and shorter than cathelicidin LL-37. These peptides show enhanced antimicrobial action, acquiring the ability to kill skin pathogens such as S.aureus, E.coli and C.albicans. These peptides have lost the ability to stimulate CXCL8/IL8 release from keratinocytes. The peptides act synergistically, killing bacteria at lower concentrations when present together, and maintain activity at increased salt condition.

The protein localises to the secreted. It localises to the vesicle. Its function is as follows. Antimicrobial protein that is an integral component of the innate immune system. Binds to bacterial lipopolysaccharides (LPS). Acts via neutrophil N-formyl peptide receptors to enhance the release of CXCL2. Postsecretory processing generates multiple cathelicidin antimicrobial peptides with various lengths which act as a topical antimicrobial defense in sweat on skin. The unprocessed precursor form, cathelicidin antimicrobial peptide, inhibits the growth of Gram-negative E.coli and E.aerogenes with efficiencies comparable to that of the mature peptide LL-37 (in vitro). In terms of biological role, antimicrobial peptide that is an integral component of the innate immune system. Binds to bacterial lipopolysaccharides (LPS). Causes membrane permeabilization by forming transmembrane pores (in vitro). Causes lysis of E.coli. Exhibits antimicrobial activity against Gram-negative bacteria such as P.aeruginosa, S.typhimurium, E.aerogenes, E.coli and P.syringae, Gram-positive bacteria such as L.monocytogenes, S.epidermidis, S.pyogenes and S.aureus, as well as vancomycin-resistant enterococci (in vitro). Exhibits antimicrobial activity against methicillin-resistant S.aureus, P.mirabilis, and C.albicans in low-salt media, but not in media containing 100 mM NaCl (in vitro). Forms chiral supramolecular assemblies with quinolone signal (PQS) molecules of P.aeruginosa, which may lead to interference of bacterial quorum signaling and perturbance of bacterial biofilm formation. May form supramolecular fiber-like assemblies on bacterial membranes. Induces cytokine and chemokine producation as well as TNF/TNFA and CSF2/GMCSF production in normal human keratinocytes. Exhibits hemolytic activity against red blood cells. Functionally, exhibits antimicrobial activity against E.coli and B.megaterium (in vitro). The sequence is that of Cathelicidin antimicrobial peptide from Chlorocebus aethiops (Green monkey).